We begin with the raw amino-acid sequence, 204 residues long: NADH-quinone oxidoreductase subunit C (204 aa).

This sequence belongs to the complex I 30 kDa subunit family. NDH-1 is composed of 14 different subunits. Subunits NuoB, C, D, E, F, and G constitute the peripheral sector of the complex.

Its subcellular location is the cell inner membrane. The catalysed reaction is a quinone + NADH + 5 H(+)(in) = a quinol + NAD(+) + 4 H(+)(out). Its function is as follows. NDH-1 shuttles electrons from NADH, via FMN and iron-sulfur (Fe-S) centers, to quinones in the respiratory chain. The immediate electron acceptor for the enzyme in this species is believed to be ubiquinone. Couples the redox reaction to proton translocation (for every two electrons transferred, four hydrogen ions are translocated across the cytoplasmic membrane), and thus conserves the redox energy in a proton gradient. This is NADH-quinone oxidoreductase subunit C from Rhodopseudomonas palustris (strain ATCC BAA-98 / CGA009).